The sequence spans 321 residues: MSALGRNLGNFIQTFSNKTSSIKTVNGLKRGLLPCCGSTVRPIAKDNHHQSPVLNVNRSSISGIRTELFNSNGLITQFQVRQYCSESKLQVSPTPKTLLSEICQREITDFKTIFEDNNNEVDSFLEEFGFELTKEGDQALLKKTFADGTNIVIRFETLEQPIEEDFDEQDENDQNERDEDDAEEQEEDEVEEEEEEQQEEEEGENDEELTEGAEEDSHEHPFEIEVTPKGNASGKLTFGCYASHDGNYTVSGFYKGGFGETVNPVDIGGTSMEFQDNILLVLQQYGINERLSFFIHDYVHNKKINDYVESFEALKDFVSKE.

A disordered region spans residues 157–220 (TLEQPIEEDF…EGAEEDSHEH (64 aa)). Acidic residues predominate over residues 161 to 214 (PIEEDFDEQDENDQNERDEDDAEEQEEDEVEEEEEEQQEEEEGENDEELTEGAE). Residues 167–212 (DEQDENDQNERDEDDAEEQEEDEVEEEEEEQQEEEEGENDEELTEG) adopt a coiled-coil conformation.

This is an uncharacterized protein from Dictyostelium discoideum (Social amoeba).